Reading from the N-terminus, the 318-residue chain is Nucleotide-binding protein Jann_0539 (318 aa).

Residue 17–24 (GPSGAGRS) coordinates ATP. 64–67 (DPRT) is a GTP binding site. The tract at residues 278–318 (GWQVSKRHRDVDKDASENSDRDRGASARTAASTDDGEAEQP) is disordered. Residues 286–302 (RDVDKDASENSDRDRGA) show a composition bias toward basic and acidic residues.

Belongs to the RapZ-like family.

Its function is as follows. Displays ATPase and GTPase activities. This is Nucleotide-binding protein Jann_0539 from Jannaschia sp. (strain CCS1).